The following is a 224-amino-acid chain: Mammalian ependymin-related protein 1 (224 aa).

The signal sequence occupies residues 1–37 (MPGRAPLRTVPGALGAWLLGGLWAWTLCGLCSLGAVG). 3 cysteine pairs are disulfide-bonded: Cys-42/Cys-172, Cys-88/Cys-222, and Cys-113/Cys-210. Asn-130 and Asn-182 each carry an N-linked (GlcNAc...) asparagine glycan.

The protein belongs to the ependymin family. As to quaternary structure, homodimer. Post-translationally, N-glycosylated; the glycan contains mannose-6-phosphate moieties. In terms of tissue distribution, ubiquitous. Detected in brain, heart, skeletal muscle, kidney, testis, ovary and prostate.

The protein resides in the lysosome lumen. It localises to the secreted. In terms of biological role, binds anionic lipids and gangliosides at acidic pH. This is Mammalian ependymin-related protein 1 (EPDR1) from Homo sapiens (Human).